Here is a 26-residue protein sequence, read N- to C-terminus: Potassium channel toxin alpha-KTx6 OcyKTx1 (26 aa).

Cys3 and Cys24 are disulfide-bonded.

Belongs to the short scorpion toxin superfamily. Potassium channel inhibitor family. Alpha-KTx 06 subfamily. Expressed by the venom gland.

The protein resides in the secreted. Blocks voltage-gated potassium channels. In Opisthacanthus cayaporum (South American scorpion), this protein is Potassium channel toxin alpha-KTx6 OcyKTx1.